Reading from the N-terminus, the 253-residue chain is Large ribosomal subunit protein uL4 (253 aa).

This sequence belongs to the universal ribosomal protein uL4 family. Part of the 50S ribosomal subunit.

Functionally, one of the primary rRNA binding proteins, this protein initially binds near the 5'-end of the 23S rRNA. It is important during the early stages of 50S assembly. It makes multiple contacts with different domains of the 23S rRNA in the assembled 50S subunit and ribosome. Forms part of the polypeptide exit tunnel. In Methanococcoides burtonii (strain DSM 6242 / NBRC 107633 / OCM 468 / ACE-M), this protein is Large ribosomal subunit protein uL4.